Here is a 262-residue protein sequence, read N- to C-terminus: Acyl-[acyl-carrier-protein]--UDP-N-acetylglucosamine O-acyltransferase (262 aa).

Belongs to the transferase hexapeptide repeat family. LpxA subfamily. As to quaternary structure, homotrimer.

Its subcellular location is the cytoplasm. The enzyme catalyses a (3R)-hydroxyacyl-[ACP] + UDP-N-acetyl-alpha-D-glucosamine = a UDP-3-O-[(3R)-3-hydroxyacyl]-N-acetyl-alpha-D-glucosamine + holo-[ACP]. Its pathway is glycolipid biosynthesis; lipid IV(A) biosynthesis; lipid IV(A) from (3R)-3-hydroxytetradecanoyl-[acyl-carrier-protein] and UDP-N-acetyl-alpha-D-glucosamine: step 1/6. Functionally, involved in the biosynthesis of lipid A, a phosphorylated glycolipid that anchors the lipopolysaccharide to the outer membrane of the cell. This chain is Acyl-[acyl-carrier-protein]--UDP-N-acetylglucosamine O-acyltransferase, found in Verminephrobacter eiseniae (strain EF01-2).